A 338-amino-acid chain; its full sequence is Histone acetyltransferase SAS2 (338 aa).

Residues 1-15 (MARSLSQSLTATTQK) are compositionally biased toward polar residues. Positions 1–31 (MARSLSQSLTATTQKLKGKKNGGKGKNKPSA) are disordered. The span at 16–31 (LKGKKNGGKGKNKPSA) shows a compositional bias: basic residues. The 294-residue stretch at 45-338 (LNERNIRQIQ…LKDEYLLIDD (294 aa)) folds into the MYST-type HAT domain. The C2HC MYST-type zinc-finger motif lies at 100–126 (LFVCEYCFKYTDDQTRFVGHVASCPFQ). Lys168 is subject to N6-acetyllysine; by autocatalysis. Acetyl-CoA-binding positions include 209–211 (ILI) and 216–222 (QRRGLGL). Catalysis depends on Glu242, which acts as the Proton donor/acceptor. 2 residues coordinate acetyl-CoA: Ser246 and Lys323.

The protein belongs to the MYST (SAS/MOZ) family. Interacts with CAC1. Component of the SAS complex, at least composed of SAS2, SAS4 and SAS5. These three proteins constitute the core of the complex and are sufficient to acetylate histones. SAS4 is essential for HAT activity of the complex, while SAS5 is required for maxiaml HAT activity. In terms of processing, autoacetylation at Lys-168 is required for proper function.

It localises to the cytoplasm. It is found in the nucleus. It carries out the reaction L-lysyl-[protein] + acetyl-CoA = N(6)-acetyl-L-lysyl-[protein] + CoA + H(+). Histone acetyltransferase (HAT) subunit of the SAS complex, a multiprotein complex that acetylates 'Lys-16' of histone H4 and 'Lys-14' of histone H3. The SAS complex is however unable to acetylate nucleosomal histones. The complex is involved in transcriptional silencing at telomeres and at HML locus. Also involved in rDNA silencing and G0 control. This chain is Histone acetyltransferase SAS2 (SAS2), found in Saccharomyces cerevisiae (strain ATCC 204508 / S288c) (Baker's yeast).